The following is a 296-amino-acid chain: Fructose-bisphosphate aldolase class 1 (296 aa).

Residue E175 is the Proton acceptor of the active site. K212 (schiff-base intermediate with dihydroxyacetone-P) is an active-site residue.

The protein belongs to the class I fructose-bisphosphate aldolase family.

It carries out the reaction beta-D-fructose 1,6-bisphosphate = D-glyceraldehyde 3-phosphate + dihydroxyacetone phosphate. It participates in carbohydrate degradation; glycolysis; D-glyceraldehyde 3-phosphate and glycerone phosphate from D-glucose: step 4/4. In Staphylococcus haemolyticus (strain JCSC1435), this protein is Fructose-bisphosphate aldolase class 1.